The sequence spans 489 residues: NADH-quinone oxidoreductase subunit N (489 aa).

Helical transmembrane passes span 15–35 (APLL…VFFI), 44–64 (GYLA…LWGV), 78–98 (FALT…TMSL), 106–126 (IEQG…ILLA), 131–151 (LIVL…LTGF), 166–186 (LVLG…IFGA), 209–229 (LTLL…KVAL), 244–264 (PTPV…AALV), 278–298 (WLPV…LGAV), 306–326 (MLAY…MVAG), 333–353 (AFLF…AVLI), 378–398 (LAVA…MAGF), 412–432 (GLPW…FFYL), and 459–479 (IALA…VFAL).

The protein belongs to the complex I subunit 2 family. NDH-1 is composed of 14 different subunits. Subunits NuoA, H, J, K, L, M, N constitute the membrane sector of the complex.

The protein localises to the cell membrane. It catalyses the reaction a quinone + NADH + 5 H(+)(in) = a quinol + NAD(+) + 4 H(+)(out). NDH-1 shuttles electrons from NADH, via FMN and iron-sulfur (Fe-S) centers, to quinones in the respiratory chain. The immediate electron acceptor for the enzyme in this species is believed to be ubiquinone. Couples the redox reaction to proton translocation (for every two electrons transferred, four hydrogen ions are translocated across the cytoplasmic membrane), and thus conserves the redox energy in a proton gradient. The protein is NADH-quinone oxidoreductase subunit N of Chloroflexus aggregans (strain MD-66 / DSM 9485).